The sequence spans 498 residues: Glycerol kinase (498 aa).

Thr12 serves as a coordination point for ADP. Positions 12, 13, and 14 each coordinate ATP. Thr12 contributes to the sn-glycerol 3-phosphate binding site. Residue Arg16 participates in ADP binding. Residues Arg82, Glu83, and Tyr134 each coordinate sn-glycerol 3-phosphate. Glycerol is bound by residues Arg82, Glu83, and Tyr134. His230 is modified (phosphohistidine; by HPr). Asp244 is a binding site for sn-glycerol 3-phosphate. Glycerol contacts are provided by Asp244 and Gln245. ADP contacts are provided by Thr266, Gly309, Gln313, Gly410, and Asn414. The ATP site is built by Thr266, Gly309, Gln313, and Gly410.

This sequence belongs to the FGGY kinase family. As to quaternary structure, homotetramer and homodimer (in equilibrium). The phosphoenolpyruvate-dependent sugar phosphotransferase system (PTS), including enzyme I, and histidine-containing protein (HPr) are required for the phosphorylation, which leads to the activation of the enzyme.

The catalysed reaction is glycerol + ATP = sn-glycerol 3-phosphate + ADP + H(+). It functions in the pathway polyol metabolism; glycerol degradation via glycerol kinase pathway; sn-glycerol 3-phosphate from glycerol: step 1/1. With respect to regulation, activated by phosphorylation and inhibited by fructose 1,6-bisphosphate (FBP). Key enzyme in the regulation of glycerol uptake and metabolism. Catalyzes the phosphorylation of glycerol to yield sn-glycerol 3-phosphate. The polypeptide is Glycerol kinase (Staphylococcus aureus (strain COL)).